The sequence spans 5154 residues: Hydrocephalus-inducing protein (5154 aa).

Positions 409–800 (MILEDSVLDP…VLLSSPSPCG (392 aa)) are interaction with KIF9. Basic and acidic residues predominate over residues 997–1009 (RPKEKQSKKEPGK). Disordered regions lie at residues 997–1033 (RPKE…GNPV), 1966–1988 (ENEE…TSIS), 2193–2222 (ADSH…SPLL), 2383–2423 (KLQQ…QGAT), 2521–2572 (HTGT…KAER), and 2706–2762 (KAQE…DIDQ). Residues 1010–1024 (KGSTSSSRRQSKASQ) are compositionally biased toward low complexity. Residues 1948–1977 (EMKKSKEEHMKAKYMENLENEEEEMNTSDQ) are a coiled coil. 2 stretches are compositionally biased toward polar residues: residues 1974–1988 (TSDQ…TSIS) and 2209–2220 (SETPQVQISSSP). Positions 2308 to 2444 (YVVMKAQEKA…LKMESIERKV (137 aa)) form a coiled coil. 4 stretches are compositionally biased toward basic and acidic residues: residues 2383–2398 (KLQQ…DELK), 2523–2535 (GTDE…DDQR), 2548–2572 (KDRE…KAER), and 2721–2734 (KLKD…ETQK). Residues 2543 to 2588 (GRKGRKDRERERLEKERAEKERLEREKAERERLEKLKALEERSDVE) adopt a coiled-coil conformation.

In terms of assembly, interacts with KIF9. As to expression, expressed in brain and testis. Expressed in ciliated epithelial cells lining bronchi and oviduct, and in spermatocytes.

The protein localises to the cell projection. Its subcellular location is the cilium. The protein resides in the cytoplasm. It localises to the cytoskeleton. It is found in the cilium axoneme. The protein localises to the flagellum. In terms of biological role, required for ciliary motility. The protein is Hydrocephalus-inducing protein (Hydin) of Mus musculus (Mouse).